A 160-amino-acid polypeptide reads, in one-letter code: Cytochrome b6-f complex subunit 4 (160 aa).

The next 3 membrane-spanning stretches (helical) occupy residues 36-56, 95-115, and 128-148; these read LLYIFPVVILGTFACLVGLAV, LLGIALQTLVPLGLMLIPFIE, and IAMAFFLFGTVITIYLGIGAC.

This sequence belongs to the cytochrome b family. PetD subfamily. In terms of assembly, the 4 large subunits of the cytochrome b6-f complex are cytochrome b6, subunit IV (17 kDa polypeptide, PetD), cytochrome f and the Rieske protein, while the 4 small subunits are PetG, PetL, PetM and PetN. The complex functions as a dimer.

It localises to the cellular thylakoid membrane. Component of the cytochrome b6-f complex, which mediates electron transfer between photosystem II (PSII) and photosystem I (PSI), cyclic electron flow around PSI, and state transitions. The protein is Cytochrome b6-f complex subunit 4 of Prochlorococcus marinus (strain MIT 9313).